The sequence spans 454 residues: Trichosetin biosynthesis cluster transcription factor TF22 (454 aa).

A DNA-binding region (zn(2)-C6 fungal-type) is located at residues 13 to 47 (CDRCRSHKLKCTVSPEDSRSGPHKCTRCIRAQVTC). Residues 51–89 (PRSQSKRTPNGKNKPEKPKPELEPPQKTSPPVCSSSLAG) are disordered. Residues 52–61 (RSQSKRTPNG) show a composition bias toward polar residues. A compositionally biased stretch (basic and acidic residues) spans 63 to 74 (NKPEKPKPELEP).

Its subcellular location is the nucleus. Its function is as follows. Transcription factor that regulates the expression of the gene cluster that mediates the biosynthesis of trichosetin, a trans-fused decalin-containing tetramic acid with antimicrobial activity. Directly activates expression of only the three biosynthetic genes PKS-NRPS1, DA and ER, while TF23 and MFS-T are induced by the final product trichosetin and not by TF22. In Gibberella fujikuroi (strain CBS 195.34 / IMI 58289 / NRRL A-6831) (Bakanae and foot rot disease fungus), this protein is Trichosetin biosynthesis cluster transcription factor TF22.